The primary structure comprises 401 residues: Imidazolonepropionase (401 aa).

Positions 66 and 68 each coordinate Fe(3+). Zn(2+)-binding residues include His66 and His68. 4-imidazolone-5-propanoate-binding residues include Arg75, Tyr138, and His171. An N-formimidoyl-L-glutamate-binding site is contributed by Tyr138. His236 is a binding site for Fe(3+). Zn(2+) is bound at residue His236. 4-imidazolone-5-propanoate is bound at residue Gln239. Asp311 is a Fe(3+) binding site. Asp311 provides a ligand contact to Zn(2+). Residues Asn313 and Gly315 each contribute to the N-formimidoyl-L-glutamate site. A 4-imidazolone-5-propanoate-binding site is contributed by Thr316.

Belongs to the metallo-dependent hydrolases superfamily. HutI family. Zn(2+) is required as a cofactor. The cofactor is Fe(3+).

The protein localises to the cytoplasm. The catalysed reaction is 4-imidazolone-5-propanoate + H2O = N-formimidoyl-L-glutamate. It functions in the pathway amino-acid degradation; L-histidine degradation into L-glutamate; N-formimidoyl-L-glutamate from L-histidine: step 3/3. Catalyzes the hydrolytic cleavage of the carbon-nitrogen bond in imidazolone-5-propanoate to yield N-formimidoyl-L-glutamate. It is the third step in the universal histidine degradation pathway. In Pseudomonas fluorescens (strain Pf0-1), this protein is Imidazolonepropionase.